We begin with the raw amino-acid sequence, 322 residues long: Ferredoxin--NADP reductase (322 aa).

The FAD site is built by D34, Q42, Y47, V87, F120, D279, and T320.

This sequence belongs to the ferredoxin--NADP reductase type 2 family. Homodimer. Requires FAD as cofactor.

The enzyme catalyses 2 reduced [2Fe-2S]-[ferredoxin] + NADP(+) + H(+) = 2 oxidized [2Fe-2S]-[ferredoxin] + NADPH. The protein is Ferredoxin--NADP reductase of Streptococcus gordonii (strain Challis / ATCC 35105 / BCRC 15272 / CH1 / DL1 / V288).